Here is a 566-residue protein sequence, read N- to C-terminus: O-fucosyltransferase 36 (566 aa).

The span at 1-14 shows a compositional bias: basic and acidic residues; sequence MERNSSDDEEDHQH. Positions 1–37 are disordered; the sequence is MERNSSDDEEDHQHLIPQNDTRIRHREDSVSSNATTI. A helical; Signal-anchor for type II membrane protein transmembrane segment spans residues 66-86; sequence YVIVFVSLIISIGLLFLLTDP. N-linked (GlcNAc...) asparagine glycans are attached at residues Asn93, Asn129, Asn138, Asn179, and Asn190. Residues 415-417 and 531-532 contribute to the substrate site; these read HFR and TF.

Belongs to the glycosyltransferase GT106 family.

Its subcellular location is the membrane. Its pathway is glycan metabolism. This chain is O-fucosyltransferase 36, found in Arabidopsis thaliana (Mouse-ear cress).